Consider the following 238-residue polypeptide: Insulin-like growth factor-binding protein 6 (238 aa).

Residues methionine 1–serine 25 form the signal peptide. An IGFBP N-terminal domain is found at alanine 26 to alanine 108. 5 cysteine pairs are disulfide-bonded: cysteine 30–cysteine 33, cysteine 41–cysteine 45, cysteine 58–cysteine 64, cysteine 72–cysteine 85, and cysteine 79–cysteine 105. Positions arginine 104–proline 159 are disordered. Basic and acidic residues-rich tracts occupy residues glycine 110 to lysine 120 and arginine 127 to lysine 138. The Thyroglobulin type-1 domain occupies methionine 157–cysteine 232. 3 disulfide bridges follow: cysteine 160–cysteine 188, cysteine 199–cysteine 210, and cysteine 212–cysteine 232. A disordered region spans residues glutamine 218–glycine 238. A compositionally biased stretch (polar residues) spans glycine 226 to glycine 238.

In terms of assembly, interacts (via C-terminal domain) with PHB2. In terms of processing, O-glycosylated.

It is found in the secreted. In terms of biological role, IGF-binding proteins prolong the half-life of the IGFs and have been shown to either inhibit or stimulate the growth promoting effects of the IGFs on cell culture. They alter the interaction of IGFs with their cell surface receptors. Activates the MAPK signaling pathway and induces cell migration. The sequence is that of Insulin-like growth factor-binding protein 6 (Igfbp6) from Mus musculus (Mouse).